Here is a 513-residue protein sequence, read N- to C-terminus: ATP synthase subunit alpha (513 aa).

169–176 contributes to the ATP binding site; the sequence is GDRQTGKT.

The protein belongs to the ATPase alpha/beta chains family. As to quaternary structure, F-type ATPases have 2 components, CF(1) - the catalytic core - and CF(0) - the membrane proton channel. CF(1) has five subunits: alpha(3), beta(3), gamma(1), delta(1), epsilon(1). CF(0) has three main subunits: a(1), b(2) and c(9-12). The alpha and beta chains form an alternating ring which encloses part of the gamma chain. CF(1) is attached to CF(0) by a central stalk formed by the gamma and epsilon chains, while a peripheral stalk is formed by the delta and b chains.

It localises to the cell inner membrane. The catalysed reaction is ATP + H2O + 4 H(+)(in) = ADP + phosphate + 5 H(+)(out). Its function is as follows. Produces ATP from ADP in the presence of a proton gradient across the membrane. The alpha chain is a regulatory subunit. This is ATP synthase subunit alpha from Nitrosomonas europaea (strain ATCC 19718 / CIP 103999 / KCTC 2705 / NBRC 14298).